Consider the following 243-residue polypeptide: Uridylate kinase (243 aa).

ATP is bound at residue 15-18 (KLSG). Positions 23–28 (GEEGFG) are involved in allosteric activation by GTP. Position 57 (glycine 57) interacts with UMP. Residues glycine 58 and arginine 62 each coordinate ATP. UMP contacts are provided by residues aspartate 77 and 138–145 (TGNPFCTT). 3 residues coordinate ATP: threonine 165, tyrosine 171, and aspartate 174.

Belongs to the UMP kinase family. Homohexamer.

The protein resides in the cytoplasm. The enzyme catalyses UMP + ATP = UDP + ADP. It participates in pyrimidine metabolism; CTP biosynthesis via de novo pathway; UDP from UMP (UMPK route): step 1/1. With respect to regulation, allosterically activated by GTP. Inhibited by UTP. Functionally, catalyzes the reversible phosphorylation of UMP to UDP. The polypeptide is Uridylate kinase (Shewanella denitrificans (strain OS217 / ATCC BAA-1090 / DSM 15013)).